The primary structure comprises 571 residues: Urease subunit alpha (571 aa).

Residues 133 to 571 enclose the Urease domain; the sequence is GGIDTHVHFI…LPLAQRYFLF (439 aa). Ni(2+) contacts are provided by H138, H140, and K221. The residue at position 221 (K221) is an N6-carboxylysine. Position 223 (H223) interacts with substrate. Residues H250 and H276 each contribute to the Ni(2+) site. H324 (proton donor) is an active-site residue. Ni(2+) is bound at residue D364.

The protein belongs to the metallo-dependent hydrolases superfamily. Urease alpha subunit family. In terms of assembly, heterotrimer of UreA (gamma), UreB (beta) and UreC (alpha) subunits. Three heterotrimers associate to form the active enzyme. It depends on Ni cation as a cofactor. Post-translationally, carboxylation allows a single lysine to coordinate two nickel ions.

The protein localises to the cytoplasm. It catalyses the reaction urea + 2 H2O + H(+) = hydrogencarbonate + 2 NH4(+). The protein operates within nitrogen metabolism; urea degradation; CO(2) and NH(3) from urea (urease route): step 1/1. This chain is Urease subunit alpha, found in Staphylococcus carnosus (strain TM300).